The chain runs to 557 residues: Arginine--tRNA ligase (557 aa).

Residues 132–142 carry the 'HIGH' region motif; it reads ANPTGLLHMGN.

It belongs to the class-I aminoacyl-tRNA synthetase family. As to quaternary structure, monomer.

It localises to the cytoplasm. It catalyses the reaction tRNA(Arg) + L-arginine + ATP = L-arginyl-tRNA(Arg) + AMP + diphosphate. The polypeptide is Arginine--tRNA ligase (Carboxydothermus hydrogenoformans (strain ATCC BAA-161 / DSM 6008 / Z-2901)).